The chain runs to 68 residues: Protein SlyX homolog (68 aa).

It belongs to the SlyX family.

The chain is Protein SlyX homolog from Ectopseudomonas mendocina (strain ymp) (Pseudomonas mendocina).